The chain runs to 86 residues: Large ribosomal subunit protein bL31B (86 aa).

Belongs to the bacterial ribosomal protein bL31 family. Type B subfamily. In terms of assembly, part of the 50S ribosomal subunit.

The polypeptide is Large ribosomal subunit protein bL31B (Vibrio vulnificus (strain CMCP6)).